The following is a 447-amino-acid chain: Retinoic acid receptor alpha (447 aa).

The interval 1-79 (MAGKGNPVPG…PPPPPRVYKP (79 aa)) is modulating. Residues 47–61 (TPSPATIETQSTSSE) show a composition bias toward polar residues. A disordered region spans residues 47-72 (TPSPATIETQSTSSEEIVPSPPSPPP). 2 consecutive NR C4-type zinc fingers follow at residues 80 to 100 (CFVCQDKSSGYHYGVSACEGC) and 116 to 140 (CHREKNCIINKVTRNRCQYCRLQKC). The nuclear receptor DNA-binding region spans 80 to 145 (CFVCQDKSSG…RLQKCLEVGM (66 aa)). The hinge stretch occupies residues 146–174 (SKESVRNDRNKKKKDEKKPECIENYVLSP). The NR LBD domain maps to 175 to 409 (DTEQMINRVR…PLIQEMLENS (235 aa)). The 9aaTAD motif lies at 400 to 408 (PLIQEMLEN). The interval 407 to 447 (ENSEGLESGATGSRPSGAPPGSCSPSLSPSSAQSSPPTQSP) is disordered. Over residues 414 to 447 (SGATGSRPSGAPPGSCSPSLSPSSAQSSPPTQSP) the composition is skewed to low complexity.

Belongs to the nuclear hormone receptor family. NR1 subfamily. As to quaternary structure, heterodimer; with an rxr molecule. Binds DNA preferentially as a rar/rxr heterodimer.

Its subcellular location is the nucleus. Functionally, receptor for retinoic acid. Retinoic acid receptors bind as heterodimers to their target response elements in response to their ligands, all-trans or 9-cis retinoic acid, and regulate gene expression in various biological processes. The rar/rxr heterodimers bind to the retinoic acid response elements (RARE) composed of tandem 5'-AGGTCA-3' sites known as DR1-DR5. The chain is Retinoic acid receptor alpha (rara) from Takifugu rubripes (Japanese pufferfish).